The primary structure comprises 700 residues: Neoverrucotoxin subunit beta (700 aa).

A B30.2/SPRY domain is found at 506–700; sequence HMPGVETIKD…QKVNGQIKLL (195 aa).

It belongs to the SNTX/VTX toxin family. As to quaternary structure, heterodimer of alpha and beta subunits. Not glycosylated. Post-translationally, four intrachain disulfide linkages are present in the heterodimer. No interchain disulfide bound links the two subunits. In terms of tissue distribution, expressed by the venom gland.

Its subcellular location is the secreted. Its function is as follows. Has hemolytic and lethal activities. Its hemolytic activity is inhibited by anionic lipids, especially potently by cardiolipin. The sequence is that of Neoverrucotoxin subunit beta from Synanceia verrucosa (Reef stonefish).